We begin with the raw amino-acid sequence, 301 residues long: Protoheme IX farnesyltransferase (301 aa).

A run of 9 helical transmembrane segments spans residues 9-29 (VLAY…VATI), 42-62 (IALI…ANSL), 89-109 (TSHA…WLWW), 113-133 (LLAG…YTMV), 142-162 (VVWG…AVTG), 168-188 (PIVL…ALAM), 211-231 (VTKQ…TLVP), 232-252 (AAGV…LLMA), and 280-300 (VVFV…GSLL).

This sequence belongs to the UbiA prenyltransferase family. Protoheme IX farnesyltransferase subfamily.

It localises to the cell membrane. The catalysed reaction is heme b + (2E,6E)-farnesyl diphosphate + H2O = Fe(II)-heme o + diphosphate. Its pathway is porphyrin-containing compound metabolism; heme O biosynthesis; heme O from protoheme: step 1/1. Converts heme B (protoheme IX) to heme O by substitution of the vinyl group on carbon 2 of heme B porphyrin ring with a hydroxyethyl farnesyl side group. The polypeptide is Protoheme IX farnesyltransferase (Rhodococcus jostii (strain RHA1)).